Here is a 190-residue protein sequence, read N- to C-terminus: Voltage-dependent calcium channel gamma-like subunit (190 aa).

The next 4 helical transmembrane spans lie at 25-45, 96-116, 131-151, and 155-175; these read FIRT…SVSI, ALAV…QLCE, LLVS…LLRN, and LIGF…LFLN.

It belongs to the PMP-22/EMP/MP20 family. CACNG subfamily. The L-type calcium channel is composed of five subunits: alpha-1, alpha-2/delta, beta and gamma.

The protein resides in the membrane. Thought to stabilize the calcium channel in an inactivated (closed) state. Modulates calcium current when coexpressed with CACNA1G. This Homo sapiens (Human) protein is Voltage-dependent calcium channel gamma-like subunit.